The sequence spans 776 residues: Reticulon-1 (776 aa).

Disordered stretches follow at residues 1-103 (MAAP…GEGS), 136-168 (ISES…DSGI), 204-244 (EVKH…EPAP), and 285-580 (LTEI…APPP). Positions 204–240 (EVKHQEQNHPELEDKDLDFKNKDTDISIKPEGVREPD) are enriched in basic and acidic residues. Position 327 is a phosphoserine (serine 327). Over residues 328 to 341 (PGSITPPSSGTEPS) the composition is skewed to low complexity. 3 positions are modified to phosphoserine: serine 350, serine 352, and serine 487. Positions 497 to 511 (AIREETGVRAEERAP) are enriched in basic and acidic residues. A Reticulon domain is found at 589–776 (AIDLLYWRDI…KIPGAKRHAE (188 aa)). 2 helical membrane-spanning segments follow: residues 603–623 (IVFG…VVSV) and 705–725 (FAVL…LTLL).

As to quaternary structure, interacts with NDRG1. Interacts with BACE1. Interacts with TMEM33. In terms of processing, phosphorylated.

It is found in the endoplasmic reticulum membrane. Its subcellular location is the golgi apparatus membrane. Its function is as follows. Inhibits amyloid precursor protein processing, probably by blocking BACE1 activity. The polypeptide is Reticulon-1 (RTN1) (Pan troglodytes (Chimpanzee)).